The primary structure comprises 794 residues: Protein transport protein SEC23 G (794 aa).

The Zn(2+) site is built by Cys56, Cys59, Cys78, and Cys81. The interval 56 to 81 (CSRCGAVLNPYARVDYQSRIWSCPFC) is zinc finger-like.

Belongs to the SEC23/SEC24 family. SEC23 subfamily. In terms of assembly, component of the coat protein complex II (COPII), composed of at least five proteins: the Sec23/24 complex, the Sec13/31 complex and Sar1. Interacts with SEC24A.

Its subcellular location is the cytoplasmic vesicle. It is found in the COPII-coated vesicle membrane. It localises to the endoplasmic reticulum membrane. The protein resides in the membrane. Component of the coat protein complex II (COPII) which promotes the formation of transport vesicles from the endoplasmic reticulum (ER). The coat has two main functions, the physical deformation of the endoplasmic reticulum membrane into vesicles and the selection of cargo molecules. The sequence is that of Protein transport protein SEC23 G from Arabidopsis thaliana (Mouse-ear cress).